Consider the following 302-residue polypeptide: Oxygen-dependent coproporphyrinogen-III oxidase (302 aa).

S94 lines the substrate pocket. 2 residues coordinate a divalent metal cation: H98 and H108. The active-site Proton donor is the H108. 110-112 (NVR) provides a ligand contact to substrate. 2 residues coordinate a divalent metal cation: H147 and H177. The important for dimerization stretch occupies residues 242–277 (YVEFNLVWDRGTLFGLQSGGRTESILMSMPPLARWE). 260 to 262 (GGR) provides a ligand contact to substrate.

It belongs to the aerobic coproporphyrinogen-III oxidase family. As to quaternary structure, homodimer. It depends on a divalent metal cation as a cofactor.

It is found in the cytoplasm. It catalyses the reaction coproporphyrinogen III + O2 + 2 H(+) = protoporphyrinogen IX + 2 CO2 + 2 H2O. It functions in the pathway porphyrin-containing compound metabolism; protoporphyrin-IX biosynthesis; protoporphyrinogen-IX from coproporphyrinogen-III (O2 route): step 1/1. In terms of biological role, involved in the heme biosynthesis. Catalyzes the aerobic oxidative decarboxylation of propionate groups of rings A and B of coproporphyrinogen-III to yield the vinyl groups in protoporphyrinogen-IX. The protein is Oxygen-dependent coproporphyrinogen-III oxidase of Photorhabdus laumondii subsp. laumondii (strain DSM 15139 / CIP 105565 / TT01) (Photorhabdus luminescens subsp. laumondii).